A 285-amino-acid chain; its full sequence is Nucleotide-binding protein FMG_1084 (285 aa).

Position 8 to 15 (8 to 15 (GMSGAGKS)) interacts with ATP. Residue 59–62 (DIRG) coordinates GTP.

Belongs to the RapZ-like family.

Its function is as follows. Displays ATPase and GTPase activities. This Finegoldia magna (strain ATCC 29328 / DSM 20472 / WAL 2508) (Peptostreptococcus magnus) protein is Nucleotide-binding protein FMG_1084.